The chain runs to 194 residues: MLIEILLLAGAYLLGSIPTGLLLAKAAGVDIRTTGSGNIGATNVYRTLGRSVGIATLVGDCLKGLIPVLAAKYLGMTDLWIALAGLAAFLGHVYTVFLGFKGGKGVATALGVFLGLAPLAVLIALGIFVAVVATSRYISLGSITAAAAMPPVVAFLSGRPPLVGVTVVIALLVIWKHRENIQRLRAGTENRFKA.

The next 5 helical transmembrane spans lie at 2-22 (LIEI…TGLL), 51-71 (SVGI…VLAA), 80-100 (WIAL…FLGF), 112-132 (VFLG…VAVV), and 155-175 (FLSG…LVIW).

Belongs to the PlsY family. As to quaternary structure, probably interacts with PlsX.

It is found in the cell inner membrane. The enzyme catalyses an acyl phosphate + sn-glycerol 3-phosphate = a 1-acyl-sn-glycero-3-phosphate + phosphate. The protein operates within lipid metabolism; phospholipid metabolism. Functionally, catalyzes the transfer of an acyl group from acyl-phosphate (acyl-PO(4)) to glycerol-3-phosphate (G3P) to form lysophosphatidic acid (LPA). This enzyme utilizes acyl-phosphate as fatty acyl donor, but not acyl-CoA or acyl-ACP. The polypeptide is Glycerol-3-phosphate acyltransferase (Geobacter metallireducens (strain ATCC 53774 / DSM 7210 / GS-15)).